The primary structure comprises 357 residues: Red-sensitive opsin (357 aa).

At 1–49 (MGDQWGDAVFAARRRGDDTTREAAFTYTNSNNTKDPFEGPNYHIAPRWV) the chain is on the extracellular side. An N-linked (GlcNAc...) asparagine glycan is attached at Asn-31. Residues 50–74 (YNLATCWMFFVVVASTVTNGLVLVA) form a helical membrane-spanning segment. The Cytoplasmic portion of the chain corresponds to 75-86 (SAKFKKLRHPLN). A helical membrane pass occupies residues 87-112 (WILVNLAIADLLETLLASTISVCNQF). At 113-126 (FGYFILGHPMCVFE) the chain is on the extracellular side. Cys-123 and Cys-200 are disulfide-bonded. A helical transmembrane segment spans residues 127-146 (GFTVATCGIAGLWSLTVISW). The Cytoplasmic segment spans residues 147 to 165 (ERWVVVCKPFGNVKFDGKM). Residues 166–189 (ATAGIVFTWVWSAVWCAPPIFGWS) form a helical membrane-spanning segment. Residues 190-215 (RYWPHGLKTSCGPDVFSGSEDPGVQS) lie on the Extracellular side of the membrane. The helical transmembrane segment at 216 to 243 (YMIVLMITCCFIPLGIIILCYIAVWWAI) threads the bilayer. Over 244–265 (RTVAQQQKDSESTQKAEKEVSR) the chain is Cytoplasmic. Residues 266–289 (MVVVMIMAYCFCWGPYTFFACFAA) traverse the membrane as a helical segment. The Extracellular portion of the chain corresponds to 290–297 (ANPGYAFH). Residues 298–322 (PLAAAMPAYFAKSATIYNPVIYVFM) form a helical membrane-spanning segment. Residue Lys-309 is modified to N6-(retinylidene)lysine. The Cytoplasmic segment spans residues 323–357 (NRQFRVCIMQLFGKKVDDGSEVSTSKTEVSSVAPA).

The protein belongs to the G-protein coupled receptor 1 family. Opsin subfamily. In terms of processing, phosphorylated on some or all of the serine and threonine residues present in the C-terminal region. The color pigments are found in the cone photoreceptor cells.

It localises to the membrane. Its function is as follows. Visual pigments are the light-absorbing molecules that mediate vision. They consist of an apoprotein, opsin, covalently linked to cis-retinal. In Psalidodon fasciatus (Banded astyanax), this protein is Red-sensitive opsin (R007).